The sequence spans 211 residues: Imidazole glycerol phosphate synthase subunit HisH (211 aa).

One can recognise a Glutamine amidotransferase type-1 domain in the interval 1 to 206 (MIGIIDYGRG…GKWVNEDATV (206 aa)). Catalysis depends on Cys79, which acts as the Nucleophile. Catalysis depends on residues His181 and Glu183.

In terms of assembly, heterodimer of HisH and HisF.

The protein resides in the cytoplasm. It catalyses the reaction 5-[(5-phospho-1-deoxy-D-ribulos-1-ylimino)methylamino]-1-(5-phospho-beta-D-ribosyl)imidazole-4-carboxamide + L-glutamine = D-erythro-1-(imidazol-4-yl)glycerol 3-phosphate + 5-amino-1-(5-phospho-beta-D-ribosyl)imidazole-4-carboxamide + L-glutamate + H(+). The catalysed reaction is L-glutamine + H2O = L-glutamate + NH4(+). It participates in amino-acid biosynthesis; L-histidine biosynthesis; L-histidine from 5-phospho-alpha-D-ribose 1-diphosphate: step 5/9. IGPS catalyzes the conversion of PRFAR and glutamine to IGP, AICAR and glutamate. The HisH subunit catalyzes the hydrolysis of glutamine to glutamate and ammonia as part of the synthesis of IGP and AICAR. The resulting ammonia molecule is channeled to the active site of HisF. The protein is Imidazole glycerol phosphate synthase subunit HisH of Desulfitobacterium hafniense (strain Y51).